We begin with the raw amino-acid sequence, 330 residues long: Lipoyl synthase (330 aa).

The interval M1–T31 is disordered. Polar residues predominate over residues A7–P16. Residues D20 to T31 are compositionally biased toward basic and acidic residues. [4Fe-4S] cluster-binding residues include C77, C82, C88, C103, C107, C110, and S317. The 219-residue stretch at C88–T306 folds into the Radical SAM core domain.

It belongs to the radical SAM superfamily. Lipoyl synthase family. The cofactor is [4Fe-4S] cluster.

The protein localises to the cytoplasm. It carries out the reaction [[Fe-S] cluster scaffold protein carrying a second [4Fe-4S](2+) cluster] + N(6)-octanoyl-L-lysyl-[protein] + 2 oxidized [2Fe-2S]-[ferredoxin] + 2 S-adenosyl-L-methionine + 4 H(+) = [[Fe-S] cluster scaffold protein] + N(6)-[(R)-dihydrolipoyl]-L-lysyl-[protein] + 4 Fe(3+) + 2 hydrogen sulfide + 2 5'-deoxyadenosine + 2 L-methionine + 2 reduced [2Fe-2S]-[ferredoxin]. The protein operates within protein modification; protein lipoylation via endogenous pathway; protein N(6)-(lipoyl)lysine from octanoyl-[acyl-carrier-protein]: step 2/2. Functionally, catalyzes the radical-mediated insertion of two sulfur atoms into the C-6 and C-8 positions of the octanoyl moiety bound to the lipoyl domains of lipoate-dependent enzymes, thereby converting the octanoylated domains into lipoylated derivatives. In Cupriavidus metallidurans (strain ATCC 43123 / DSM 2839 / NBRC 102507 / CH34) (Ralstonia metallidurans), this protein is Lipoyl synthase.